The chain runs to 520 residues: CBL-interacting serine/threonine-protein kinase 18 (520 aa).

Disordered regions lie at residues 1 to 29 (MAQA…PHPK) and 48 to 67 (TDKD…SPRN). Positions 17-29 (PDPPPPPPPPHPK) are enriched in pro residues. Residues 55–66 (SPQSPRSPRSPR) show a composition bias toward low complexity. The region spanning 74 to 328 (YELGKLLGHG…IPEIMKNRWF (255 aa)) is the Protein kinase domain. Residues 80–88 (LGHGTFAKV) and lysine 103 contribute to the ATP site. Aspartate 196 functions as the Proton acceptor in the catalytic mechanism. An activation loop region spans residues 214 to 243 (DFGLSAVAEQLRQDGLCHTFCGTPAYIAPE). Serine 218 is subject to Phosphoserine. Threonine 232 carries the phosphothreonine modification. The tract at residues 349–368 (EDEEEEASSSGRSSTVSESD) is disordered. Positions 356-366 (SSSGRSSTVSE) are enriched in low complexity. Residues 382–406 (PRPSSLNAFDIISFSSGFDLSGLFE) enclose the NAF domain. Residues 410–439 (GEGTRFVSGAPVSKIISKLEEIAKIVSFTV) are PPI.

It belongs to the protein kinase superfamily. CAMK Ser/Thr protein kinase family. SNF1 subfamily. Interacts with CBL1 and CBL9. The cofactor is Mn(2+).

It catalyses the reaction L-seryl-[protein] + ATP = O-phospho-L-seryl-[protein] + ADP + H(+). The enzyme catalyses L-threonyl-[protein] + ATP = O-phospho-L-threonyl-[protein] + ADP + H(+). CIPK serine-threonine protein kinases interact with CBL proteins. Binding of a CBL protein to the regulatory NAF domain of CIPK protein lead to the activation of the kinase in a calcium-dependent manner. This Arabidopsis thaliana (Mouse-ear cress) protein is CBL-interacting serine/threonine-protein kinase 18 (CIPK18).